Here is a 183-residue protein sequence, read N- to C-terminus: Peptide deformylase (183 aa).

Residues C90 and H132 each coordinate Fe cation. E133 is an active-site residue. H136 contacts Fe cation.

It belongs to the polypeptide deformylase family. Requires Fe(2+) as cofactor.

It catalyses the reaction N-terminal N-formyl-L-methionyl-[peptide] + H2O = N-terminal L-methionyl-[peptide] + formate. In terms of biological role, removes the formyl group from the N-terminal Met of newly synthesized proteins. Requires at least a dipeptide for an efficient rate of reaction. N-terminal L-methionine is a prerequisite for activity but the enzyme has broad specificity at other positions. This chain is Peptide deformylase, found in Parafrankia sp. (strain EAN1pec).